An 887-amino-acid polypeptide reads, in one-letter code: MAELPQSRINERNITSEMRESFLDYAMSVIVARALPDVRDGLKPVHRRILYGLNEQGMTPDKSYKKSARIVGDVMGKYHPHGDSSIYEAMVRMAQDFSYRYPLVDGQGNFGSMDGDGAAAMRYTEARMTKITLELLRDINKDTIDFIDNYDGNEREPSVLPARFPNLLANGASGIAVGMATNIPPHNLTELINGVLSLSKNPDISIAELMEDIEGPDFPTAGLILGKSGIRRAYETGRGSIQMRSRAVIEERGGGRQRIVVTEIPFQVNKARMIEKIAELVRDKKIDGITDLRDETSLRTGVRVVIDVRKDANASVILNNLYKQTPLQTSFGVNMIALVNGRPKLINLKEALVHYLEHQKTVVRRRTQYNLRKAKDRAHILEGLRIALDHIDEIISTIRESDTDKVAMESLQQRFKLSEKQAQAILDMRLRRLTGLERDKIEAEYNELLNYISELEAILADEEVLLQLVRDELTEIRDRFGDDRRTEIQLGGFEDLEDEDLIPEEQIVITLSHNNYIKRLPVSTYRAQNRGGRGVQGMNTLEEDFVSQLVTLSTHDHVLFFTNKGRVYKLKGYEVPELSRQSKGIPVVNAIELENDEVISTMIAVKDLESEDNFLVFATKRGVVKRSALSNFSRINRNGKIAISFREDDELIAVRLTSGQEDILIGTSHASLIRFPESTLRPLGRTATGVKGITLREGDEVVGLDVAHANSVDEVLVVTENGYGKRTPVNDYRLSNRGGKGIKTATITERNGNVVCITTVTGEEDLMIVTNAGVIIRLDVADISQNGRAAQGVRLIRLGDDQFVSTVAKVKEDAEDETNEDEQSTSTVSEDGTEQQREAVVNDETPGNAIHTEVIDSEENDEDGRIEVRQDFMDRVEEDIQQSSDEE.

In terms of domain architecture, Topo IIA-type catalytic spans 35-501 (LPDVRDGLKP…GFEDLEDEDL (467 aa)). Tyr-123 functions as the O-(5'-phospho-DNA)-tyrosine intermediate in the catalytic mechanism. Residues 528 to 534 (QNRGGRG) carry the GyrA-box motif. Positions 811-865 (KEDAEDETNEDEQSTSTVSEDGTEQQREAVVNDETPGNAIHTEVIDSEENDEDGR) are disordered. Residues 813–823 (DAEDETNEDEQ) are compositionally biased toward acidic residues.

It belongs to the type II topoisomerase GyrA/ParC subunit family. In terms of assembly, heterotetramer, composed of two GyrA and two GyrB chains. In the heterotetramer, GyrA contains the active site tyrosine that forms a transient covalent intermediate with DNA, while GyrB binds cofactors and catalyzes ATP hydrolysis.

The protein resides in the cytoplasm. It carries out the reaction ATP-dependent breakage, passage and rejoining of double-stranded DNA.. Its function is as follows. A type II topoisomerase that negatively supercoils closed circular double-stranded (ds) DNA in an ATP-dependent manner to modulate DNA topology and maintain chromosomes in an underwound state. Negative supercoiling favors strand separation, and DNA replication, transcription, recombination and repair, all of which involve strand separation. Also able to catalyze the interconversion of other topological isomers of dsDNA rings, including catenanes and knotted rings. Type II topoisomerases break and join 2 DNA strands simultaneously in an ATP-dependent manner. The polypeptide is DNA gyrase subunit A (Staphylococcus aureus (strain MSSA476)).